Here is a 194-residue protein sequence, read N- to C-terminus: Probable GTP-binding protein EngB (194 aa).

The region spanning 22 to 194 (DLPEFALAGR…KFWDWIEDKM (173 aa)) is the EngB-type G domain. Residues 30–37 (GRSNVGKS), 57–61 (GKTQT), 75–78 (DVPG), 142–145 (TKMD), and 175–177 (FSS) each bind GTP. Ser37 and Thr59 together coordinate Mg(2+).

The protein belongs to the TRAFAC class TrmE-Era-EngA-EngB-Septin-like GTPase superfamily. EngB GTPase family. Requires Mg(2+) as cofactor.

In terms of biological role, necessary for normal cell division and for the maintenance of normal septation. The protein is Probable GTP-binding protein EngB of Lactobacillus gasseri (strain ATCC 33323 / DSM 20243 / BCRC 14619 / CIP 102991 / JCM 1131 / KCTC 3163 / NCIMB 11718 / NCTC 13722 / AM63).